A 256-amino-acid chain; its full sequence is 5-keto-4-deoxy-D-glucarate aldolase (256 aa).

The active-site Proton acceptor is H50. Q151 contributes to the substrate binding site. Residue E153 coordinates Mg(2+). The substrate site is built by S178 and D179. Mg(2+) is bound at residue D179.

It belongs to the HpcH/HpaI aldolase family. KDGluc aldolase subfamily. As to quaternary structure, homohexamer; trimer of dimers. Requires Mg(2+) as cofactor.

It carries out the reaction 5-dehydro-4-deoxy-D-glucarate = 2-hydroxy-3-oxopropanoate + pyruvate. The enzyme catalyses 2-dehydro-3-deoxy-D-glucarate = 2-hydroxy-3-oxopropanoate + pyruvate. It functions in the pathway carbohydrate acid metabolism; galactarate degradation; D-glycerate from galactarate: step 2/3. In terms of biological role, catalyzes the reversible retro-aldol cleavage of both 5-keto-4-deoxy-D-glucarate and 2-keto-3-deoxy-D-glucarate to pyruvate and tartronic semialdehyde. The chain is 5-keto-4-deoxy-D-glucarate aldolase from Escherichia coli (strain K12 / DH10B).